The following is a 389-amino-acid chain: Ribonucleoside-diphosphate reductase subunit M2 (389 aa).

Serine 20 bears the Phosphoserine mark. Position 33 is a phosphothreonine (threonine 33). Positions 49–51 (RRI) match the Cy motif. Residues aspartate 138, glutamate 169, and histidine 172 each coordinate Fe cation. Tyrosine 176 is a catalytic residue. Fe cation-binding residues include glutamate 232, glutamate 266, and histidine 269.

Belongs to the ribonucleoside diphosphate reductase small chain family. Heterodimer of a large and a small subunit. Interacts (via Cy motif and when phosphorylated at Thr-33) with CCNF; the interaction occurs exclusively in G2 and early M. It depends on Fe cation as a cofactor. In terms of processing, phosphorylation on Ser-20 relieves the inhibitory effect on Wnt signaling. Phosphorylated on Thr-33 by CDK1 and CDK2; predominantly in G2 and M phase. Post-translationally, ubiquitinated by the SCF(CCNF) E3 ubiquitin-protein ligase complex; leading to its degradation by the proteasome.

It is found in the cytoplasm. Its subcellular location is the nucleus. It catalyses the reaction a 2'-deoxyribonucleoside 5'-diphosphate + [thioredoxin]-disulfide + H2O = a ribonucleoside 5'-diphosphate + [thioredoxin]-dithiol. Provides the precursors necessary for DNA synthesis. Catalyzes the biosynthesis of deoxyribonucleotides from the corresponding ribonucleotides. Inhibits Wnt signaling. In Macaca fascicularis (Crab-eating macaque), this protein is Ribonucleoside-diphosphate reductase subunit M2 (RRM2).